We begin with the raw amino-acid sequence, 288 residues long: Acetyl-coenzyme A carboxylase carboxyl transferase subunit beta (288 aa).

The CoA carboxyltransferase N-terminal domain occupies 32–288 (LFAKCPACKH…LELHTEVENV (257 aa)). Zn(2+)-binding residues include C36, C39, C54, and C57. The C4-type zinc finger occupies 36-57 (CPACKHTIYQKDLGKNKVCPNC).

The protein belongs to the AccD/PCCB family. As to quaternary structure, acetyl-CoA carboxylase is a heterohexamer composed of biotin carboxyl carrier protein (AccB), biotin carboxylase (AccC) and two subunits each of ACCase subunit alpha (AccA) and ACCase subunit beta (AccD). The cofactor is Zn(2+).

It localises to the cytoplasm. It catalyses the reaction N(6)-carboxybiotinyl-L-lysyl-[protein] + acetyl-CoA = N(6)-biotinyl-L-lysyl-[protein] + malonyl-CoA. It participates in lipid metabolism; malonyl-CoA biosynthesis; malonyl-CoA from acetyl-CoA: step 1/1. In terms of biological role, component of the acetyl coenzyme A carboxylase (ACC) complex. Biotin carboxylase (BC) catalyzes the carboxylation of biotin on its carrier protein (BCCP) and then the CO(2) group is transferred by the transcarboxylase to acetyl-CoA to form malonyl-CoA. In Lactococcus lactis subsp. cremoris (strain SK11), this protein is Acetyl-coenzyme A carboxylase carboxyl transferase subunit beta.